The sequence spans 220 residues: UPF0319 protein Asuc_1002 (220 aa).

The N-terminal stretch at 1-21 (MKFRLAAVAAAALLASSASFA) is a signal peptide.

This sequence belongs to the UPF0319 family.

This chain is UPF0319 protein Asuc_1002, found in Actinobacillus succinogenes (strain ATCC 55618 / DSM 22257 / CCUG 43843 / 130Z).